A 297-amino-acid chain; its full sequence is Elongation factor Ts (297 aa).

Positions 82-85 (TDFV) are involved in Mg(2+) ion dislocation from EF-Tu. Low complexity predominate over residues 223-265 (AQTAAAAETAPPEVSEPEPAAAVTAEEPTPEPVAAAEQPAEPV). The interval 223–297 (AQTAAAAETA…GKSRSNKKKK (75 aa)) is disordered. Residues 286–297 (SGGKSRSNKKKK) show a composition bias toward basic residues.

Belongs to the EF-Ts family.

Its subcellular location is the cytoplasm. In terms of biological role, associates with the EF-Tu.GDP complex and induces the exchange of GDP to GTP. It remains bound to the aminoacyl-tRNA.EF-Tu.GTP complex up to the GTP hydrolysis stage on the ribosome. This chain is Elongation factor Ts, found in Thermosynechococcus vestitus (strain NIES-2133 / IAM M-273 / BP-1).